The primary structure comprises 217 residues: 3,4-dihydroxy-2-butanone 4-phosphate synthase (217 aa).

Residues 37–38 (RE), D42, 150–154 (RQGHT), and E174 each bind D-ribulose 5-phosphate. E38 is a binding site for Mg(2+). H153 lines the Mg(2+) pocket.

It belongs to the DHBP synthase family. As to quaternary structure, homodimer. The cofactor is Mg(2+). Mn(2+) is required as a cofactor.

It catalyses the reaction D-ribulose 5-phosphate = (2S)-2-hydroxy-3-oxobutyl phosphate + formate + H(+). Its pathway is cofactor biosynthesis; riboflavin biosynthesis; 2-hydroxy-3-oxobutyl phosphate from D-ribulose 5-phosphate: step 1/1. Catalyzes the conversion of D-ribulose 5-phosphate to formate and 3,4-dihydroxy-2-butanone 4-phosphate. The chain is 3,4-dihydroxy-2-butanone 4-phosphate synthase from Desulforamulus reducens (strain ATCC BAA-1160 / DSM 100696 / MI-1) (Desulfotomaculum reducens).